The following is a 401-amino-acid chain: Probable 2,3-bisphosphoglycerate-independent phosphoglycerate mutase (401 aa).

It belongs to the BPG-independent phosphoglycerate mutase family. A-PGAM subfamily.

It carries out the reaction (2R)-2-phosphoglycerate = (2R)-3-phosphoglycerate. It functions in the pathway carbohydrate degradation; glycolysis; pyruvate from D-glyceraldehyde 3-phosphate: step 3/5. Catalyzes the interconversion of 2-phosphoglycerate and 3-phosphoglycerate. This is Probable 2,3-bisphosphoglycerate-independent phosphoglycerate mutase from Thermotoga neapolitana (strain ATCC 49049 / DSM 4359 / NBRC 107923 / NS-E).